Reading from the N-terminus, the 301-residue chain is Glycine--tRNA ligase alpha subunit (301 aa).

This sequence belongs to the class-II aminoacyl-tRNA synthetase family. As to quaternary structure, tetramer of two alpha and two beta subunits.

The protein localises to the cytoplasm. The catalysed reaction is tRNA(Gly) + glycine + ATP = glycyl-tRNA(Gly) + AMP + diphosphate. This chain is Glycine--tRNA ligase alpha subunit, found in Proteus mirabilis (strain HI4320).